The following is a 1025-amino-acid chain: Exportin-T (1025 aa).

It belongs to the exportin family.

It localises to the nucleus. The protein resides in the cytoplasm. Its function is as follows. tRNA nucleus export receptor which facilitates tRNA translocation across the nuclear pore complex. Involved in pre-tRNA splicing, probably by affecting the interaction of pre-tRNA with splicing endonuclease. This is Exportin-T (LOS1) from Yarrowia lipolytica (strain CLIB 122 / E 150) (Yeast).